The primary structure comprises 475 residues: UDP-glycosyltransferase 101 (475 aa).

The active-site Proton acceptor is H15. H15 is a binding site for an anthocyanidin. The active-site Charge relay is D117. 7 residues coordinate UDP-alpha-D-glucose: A345, Q347, H362, W365, N366, S367, and E370. G385 is a binding site for an anthocyanidin. E386 and Q387 together coordinate UDP-alpha-D-glucose.

Belongs to the UDP-glycosyltransferase family.

The enzyme catalyses (20S)-protopanaxadiol + UDP-alpha-D-glucose = (20S)-ginsenoside C-K + UDP + H(+). It carries out the reaction (20S)-ginsenoside Rg3 + UDP-alpha-D-glucose = (20S)-ginsenoside Rd + UDP + H(+). It catalyses the reaction (20S)-protopanaxatriol + UDP-alpha-D-glucose = (20S)-ginsenoside F1 + UDP + H(+). The catalysed reaction is (20S)-ginsenoside F1 + UDP-alpha-D-glucose = (20S)-ginsenoside Rg1 + UDP + H(+). It functions in the pathway secondary metabolite biosynthesis; terpenoid biosynthesis. Its function is as follows. Component of the dammarane-type triterpene saponins (e.g. ginsenosides or panaxosides) biosynthetic pathway. Glycosyltransferase that catalyzes the biosynthesis of ginsenoside F1 from protopanaxatriol (PPT) and the conversion of ginsenoside F1 to ginsenoside Rg1. Triggers C20-OH glycosylation of ginsenoside Rg3 to produce ginsenoside Rd. Mediates the conversion of protopanaxadiol (PPD) to the ginsenoside compound K. This is UDP-glycosyltransferase 101 from Panax ginseng (Korean ginseng).